A 234-amino-acid polypeptide reads, in one-letter code: UDP-2,3-diacylglucosamine hydrolase (234 aa).

The Mn(2+) site is built by Asp-9, His-11, Asp-42, Asn-80, and His-115. Residue 80–81 (NR) participates in substrate binding. Residues Asp-123, Ser-161, Lys-165, Lys-168, and His-196 each coordinate substrate. Residues His-196 and His-198 each contribute to the Mn(2+) site.

The protein belongs to the LpxH family. It depends on Mn(2+) as a cofactor.

It is found in the cell inner membrane. It carries out the reaction UDP-2-N,3-O-bis[(3R)-3-hydroxytetradecanoyl]-alpha-D-glucosamine + H2O = 2-N,3-O-bis[(3R)-3-hydroxytetradecanoyl]-alpha-D-glucosaminyl 1-phosphate + UMP + 2 H(+). It participates in glycolipid biosynthesis; lipid IV(A) biosynthesis; lipid IV(A) from (3R)-3-hydroxytetradecanoyl-[acyl-carrier-protein] and UDP-N-acetyl-alpha-D-glucosamine: step 4/6. Its function is as follows. Hydrolyzes the pyrophosphate bond of UDP-2,3-diacylglucosamine to yield 2,3-diacylglucosamine 1-phosphate (lipid X) and UMP by catalyzing the attack of water at the alpha-P atom. Involved in the biosynthesis of lipid A, a phosphorylated glycolipid that anchors the lipopolysaccharide to the outer membrane of the cell. The protein is UDP-2,3-diacylglucosamine hydrolase of Histophilus somni (strain 129Pt) (Haemophilus somnus).